A 938-amino-acid chain; its full sequence is AP-2 complex subunit alpha-2 (938 aa).

A 1,2-diacyl-sn-glycero-3-phospho-(1D-myo-inositol-3,4,5-trisphosphate) is bound by residues 11–12 (RG), Lys-43, Tyr-53, and 57–61 (KYVCK). Residues 615–681 (LKKKKGPSTV…TGPPPSSGGG (67 aa)) are disordered. Positions 646–667 (PASTSAASTPSPSADLLGLGAV) are enriched in low complexity. Over residues 668–677 (PPAPTGPPPS) the composition is skewed to pro residues.

The protein belongs to the adaptor complexes large subunit family. Adaptor protein complex 2 (AP-2) is a heterotetramer composed of two large adaptins (alpha-type subunit AP2A1 or AP2A2 and beta-type subunit AP2B1), a medium adaptin (mu-type subunit AP2M1) and a small adaptin (sigma-type subunit AP2S1). Interacts with clathrin. Binds EPN1, EPS15, AMPH, SNAP91 and BIN1. Interacts with HIP1. Interacts with DGKD. Interacts with DENND1A, DENND1B and DENND1C. Interacts with FCHO1 and DAB2. Interacts with ATAT1; this interaction is required for efficient alpha-tubulin acetylation by ATAT1. Interacts with KIAA1107. Together with AP2B1 and AP2M1, it interacts with ADAM10; this interaction facilitates ADAM10 endocytosis from the plasma membrane during long-term potentiation in hippocampal neurons. Interacts with CLN3 (via dileucine motif). Interacts with ABCB11; this interaction regulates cell membrane expression of ABCB11 through its internalization in a clathrin-dependent manner and its subsequent degradation. Interacts with Cacfd1. Interacts with DNAJC6. In terms of tissue distribution, widely expressed.

The protein localises to the cell membrane. The protein resides in the membrane. It localises to the coated pit. Its function is as follows. Component of the adaptor protein complex 2 (AP-2). Adaptor protein complexes function in protein transport via transport vesicles in different membrane traffic pathways. Adaptor protein complexes are vesicle coat components and appear to be involved in cargo selection and vesicle formation. AP-2 is involved in clathrin-dependent endocytosis in which cargo proteins are incorporated into vesicles surrounded by clathrin (clathrin-coated vesicles, CCVs) which are destined for fusion with the early endosome. The clathrin lattice serves as a mechanical scaffold but is itself unable to bind directly to membrane components. Clathrin-associated adaptor protein (AP) complexes which can bind directly to both the clathrin lattice and to the lipid and protein components of membranes are considered to be the major clathrin adaptors contributing the CCV formation. AP-2 also serves as a cargo receptor to selectively sort the membrane proteins involved in receptor-mediated endocytosis. AP-2 seems to play a role in the recycling of synaptic vesicle membranes from the presynaptic surface. AP-2 recognizes Y-X-X-[FILMV] (Y-X-X-Phi) and [ED]-X-X-X-L-[LI] endocytosis signal motifs within the cytosolic tails of transmembrane cargo molecules. AP-2 may also play a role in maintaining normal post-endocytic trafficking through the ARF6-regulated, non-clathrin pathway. During long-term potentiation in hippocampal neurons, AP-2 is responsible for the endocytosis of ADAM10. The AP-2 alpha subunit binds polyphosphoinositide-containing lipids, positioning AP-2 on the membrane. The AP-2 alpha subunit acts via its C-terminal appendage domain as a scaffolding platform for endocytic accessory proteins. The AP-2 alpha and AP-2 sigma subunits are thought to contribute to the recognition of the [ED]-X-X-X-L-[LI] motif. The protein is AP-2 complex subunit alpha-2 of Rattus norvegicus (Rat).